Reading from the N-terminus, the 45-residue chain is Cytochrome b559 subunit beta (45 aa).

The chain crosses the membrane as a helical span at residues 20 to 36 (WLALHTLGIPTVFFLGA). Histidine 24 is a binding site for heme.

Belongs to the PsbE/PsbF family. Heterodimer of an alpha subunit and a beta subunit. PSII is composed of 1 copy each of membrane proteins PsbA, PsbB, PsbC, PsbD, PsbE, PsbF, PsbH, PsbI, PsbJ, PsbK, PsbL, PsbM, PsbT, PsbX, PsbY, PsbZ, Psb30/Ycf12, peripheral proteins PsbO, CyanoQ (PsbQ), PsbU, PsbV and a large number of cofactors. It forms dimeric complexes. Requires heme b as cofactor.

Its subcellular location is the cellular thylakoid membrane. In terms of biological role, this b-type cytochrome is tightly associated with the reaction center of photosystem II (PSII). PSII is a light-driven water:plastoquinone oxidoreductase that uses light energy to abstract electrons from H(2)O, generating O(2) and a proton gradient subsequently used for ATP formation. It consists of a core antenna complex that captures photons, and an electron transfer chain that converts photonic excitation into a charge separation. The polypeptide is Cytochrome b559 subunit beta (Synechococcus sp. (strain CC9902)).